A 435-amino-acid chain; its full sequence is Probable exopolygalacturonase B (435 aa).

The signal sequence occupies residues 1–15; that stretch reads MKFFTAALFASAVSA. N-linked (GlcNAc...) asparagine glycans are attached at residues Asn59, Asn184, and Asn224. The Proton donor role is filled by Asp254. An intrachain disulfide couples Cys256 to Cys273. N-linked (GlcNAc...) asparagine glycans are attached at residues Asn262 and Asn274. His277 is a catalytic residue. Asn301, Asn328, Asn365, and Asn368 each carry an N-linked (GlcNAc...) asparagine glycan. Residues Cys391 and Cys397 are joined by a disulfide bond.

The protein belongs to the glycosyl hydrolase 28 family.

The protein resides in the secreted. It catalyses the reaction [(1-&gt;4)-alpha-D-galacturonosyl](n) + H2O = alpha-D-galacturonate + [(1-&gt;4)-alpha-D-galacturonosyl](n-1). Specific in hydrolyzing the terminal glycosidic bond of polygalacturonic acid and oligogalacturonates. The sequence is that of Probable exopolygalacturonase B (pgxB) from Aspergillus terreus (strain NIH 2624 / FGSC A1156).